The primary structure comprises 464 residues: MNRSPSSSGLLPLPGAPSSSWALYRARLSSLLQSVDTAVFIAFWLFGLINNVLYVIILSAAQDLVGNGIPKGVVLLADVMPSFLTKLVAPYFIHRIPYATRIFIFVTLSSAGMLLIAFTPPSRSVAVKLIGVVLSSISSGGGELSFLGLTHYYGHMSLAAWGSGTGGAGLIGSLLYVMLTDWIGLSVKTSLLASAFLPIIMLVSFFLILPHGPLRASARKTYEPIANRDSFQEESEGAENNFDDIPTSTASSSLLAPGPAVAATAYSSHPTEDARKDSLAAKIQRSKSLFFPYMLPLLLVYIAEYTINQGVSPTLLFPLESSPFAEFRSFYPFYGFLYQVGVFISRSSIAFIRIHHLYLPSLLQVANLVLLTLHALLNFIPSVYIVFVIIFWEGLLGGCVYVNTFAEIMEHVPAEDREFSLGATSVSDSGGICVASFLSMAMEIWLCNWQVDHGRDWCRRIKAG.

The signal sequence occupies residues 1–22; the sequence is MNRSPSSSGLLPLPGAPSSSWA. 10 consecutive transmembrane segments (helical) span residues 38–58, 73–93, 102–122, 129–149, 167–187, 190–210, 288–308, 332–352, 354–374, and 376–396; these read AVFI…VIIL, VVLL…PYFI, IFIF…TPPS, LIGV…FLGL, GAGL…GLSV, SLLA…LILP, SLFF…YTIN, PFYG…IAFI, IHHL…LTLH, and LLNF…EGLL.

It belongs to the battenin family.

The protein resides in the vacuole membrane. Involved in vacuolar transport and vacuole pH homeostasis. Also required for cytokinesis. This Neurospora crassa (strain ATCC 24698 / 74-OR23-1A / CBS 708.71 / DSM 1257 / FGSC 987) protein is Protein btn-1 (cln3).